The following is a 183-amino-acid chain: 2-hydroxy-1,4-benzoquinone reductase (183 aa).

FMN-binding positions include 11-18 (SLRRDSFN), 77-80 (EYNR), and S113.

Belongs to the SsuE family. As to quaternary structure, homotetramer. The cofactor is FMN.

The catalysed reaction is 2-hydroxy-1,4-benzoquinone + NADH + 2 H(+) = benzene-1,2,4-triol + NAD(+). Its function is as follows. Involved in the metabolism of 4-aminophenol. Catalyzes the reduction of the auto-oxidation product 2-hydroxy-1,4-benzoquinone back to hydroxyquinol. Has a broad substrate specificity toward benzoquinones, converting them to the corresponding 1,4-benzenediols. The sequence is that of 2-hydroxy-1,4-benzoquinone reductase from Burkholderia sp.